The chain runs to 75 residues: MKELLEKILRGIVKHPEEVVVMEFDEEGKKVYEIVVNEEDVGQVIGKDGRTIKSLKILLSALMGDSKEITIKVVR.

Residues 29 to 75 form the KH domain; it reads KKVYEIVVNEEDVGQVIGKDGRTIKSLKILLSALMGDSKEITIKVVR.

This sequence belongs to the KhpA RNA-binding protein family. As to quaternary structure, forms a complex with KhpB.

Its subcellular location is the cytoplasm. Functionally, a probable RNA chaperone. Forms a complex with KhpB which binds to cellular RNA and controls its expression. Plays a role in peptidoglycan (PG) homeostasis and cell length regulation. This Thermotoga maritima (strain ATCC 43589 / DSM 3109 / JCM 10099 / NBRC 100826 / MSB8) protein is RNA-binding protein KhpA.